We begin with the raw amino-acid sequence, 182 residues long: Hypoxanthine/guanine phosphoribosyltransferase (182 aa).

This sequence belongs to the purine/pyrimidine phosphoribosyltransferase family. Archaeal HPRT subfamily. In terms of assembly, homodimer.

The protein localises to the cytoplasm. The enzyme catalyses IMP + diphosphate = hypoxanthine + 5-phospho-alpha-D-ribose 1-diphosphate. The catalysed reaction is GMP + diphosphate = guanine + 5-phospho-alpha-D-ribose 1-diphosphate. It participates in purine metabolism; IMP biosynthesis via salvage pathway; IMP from hypoxanthine: step 1/1. In terms of biological role, catalyzes a salvage reaction resulting in the formation of IMP that is energically less costly than de novo synthesis. The protein is Hypoxanthine/guanine phosphoribosyltransferase of Methanosphaerula palustris (strain ATCC BAA-1556 / DSM 19958 / E1-9c).